The primary structure comprises 1006 residues: DNA polymerase (1006 aa).

Belongs to the DNA polymerase type-B family. As to quaternary structure, interacts with OPG148. Component of the Uracil-DNA glycosylase(UDG)-OPG148-polymerase complex; OPG148 and OPG116/UDG form a heterodimeric processivity factor that associates with OPG071 to form the processive polymerase holoenzyme.

It catalyses the reaction DNA(n) + a 2'-deoxyribonucleoside 5'-triphosphate = DNA(n+1) + diphosphate. Functionally, catalyzes DNA synthesis. Acquires processivity by associating with a heterodimeric processivity factor comprised of the viral OPG148 and OPG116 proteins, thereby forming the DNA polymerase holoenzyme. Displays 3'- to 5' exonuclease activity. Might participate in viral DNA recombination. Does not perform OPG116/D4synthesis across an abasic site. The chain is DNA polymerase (OPG071) from Monkeypox virus.